Consider the following 99-residue polypeptide: NADH-quinone oxidoreductase subunit K (99 aa).

3 helical membrane passes run 3 to 23 (ILFSLFISMAMFTFGIIGILI), 28 to 48 (LIVFMCVELMLNAANLLFVAF), and 59 to 79 (IWVFFVLVVAAAEAAVGLAII).

The protein belongs to the complex I subunit 4L family. NDH-1 is composed of 14 different subunits. Subunits NuoA, H, J, K, L, M, N constitute the membrane sector of the complex.

It localises to the cell inner membrane. The catalysed reaction is a quinone + NADH + 5 H(+)(in) = a quinol + NAD(+) + 4 H(+)(out). Functionally, NDH-1 shuttles electrons from NADH, via FMN and iron-sulfur (Fe-S) centers, to quinones in the respiratory chain. The immediate electron acceptor for the enzyme in this species is believed to be ubiquinone. Couples the redox reaction to proton translocation (for every two electrons transferred, four hydrogen ions are translocated across the cytoplasmic membrane), and thus conserves the redox energy in a proton gradient. This Protochlamydia amoebophila (strain UWE25) protein is NADH-quinone oxidoreductase subunit K.